A 431-amino-acid chain; its full sequence is 3-phosphoshikimate 1-carboxyvinyltransferase (431 aa).

3 residues coordinate 3-phosphoshikimate: K21, S22, and R26. Residue K21 participates in phosphoenolpyruvate binding. Positions 93 and 121 each coordinate phosphoenolpyruvate. 4 residues coordinate 3-phosphoshikimate: S166, Q168, D318, and K345. Residue Q168 coordinates phosphoenolpyruvate. The active-site Proton acceptor is the D318. The phosphoenolpyruvate site is built by R349 and R391.

The protein belongs to the EPSP synthase family. In terms of assembly, monomer.

Its subcellular location is the cytoplasm. It catalyses the reaction 3-phosphoshikimate + phosphoenolpyruvate = 5-O-(1-carboxyvinyl)-3-phosphoshikimate + phosphate. Its pathway is metabolic intermediate biosynthesis; chorismate biosynthesis; chorismate from D-erythrose 4-phosphate and phosphoenolpyruvate: step 6/7. Its function is as follows. Catalyzes the transfer of the enolpyruvyl moiety of phosphoenolpyruvate (PEP) to the 5-hydroxyl of shikimate-3-phosphate (S3P) to produce enolpyruvyl shikimate-3-phosphate and inorganic phosphate. This chain is 3-phosphoshikimate 1-carboxyvinyltransferase, found in Sulfurihydrogenibium sp. (strain YO3AOP1).